Reading from the N-terminus, the 610-residue chain is Butyryl-CoA dehydrogenase Swol_2052 (610 aa).

Glu451 functions as the Proton acceptor in the catalytic mechanism.

It belongs to the acyl-CoA dehydrogenase family. The cofactor is FAD.

Its subcellular location is the cytoplasm. The enzyme catalyses butanoyl-CoA + oxidized [electron-transfer flavoprotein] + H(+) = (2E)-butenoyl-CoA + reduced [electron-transfer flavoprotein]. It catalyses the reaction a short-chain 2,3-saturated fatty acyl-CoA + oxidized [electron-transfer flavoprotein] + H(+) = a short-chain (2E)-enoyl-CoA + reduced [electron-transfer flavoprotein]. It participates in lipid metabolism; butanoate metabolism. Its function is as follows. Involved in syntrophic growth of S.wolfei with butyrate, as part of the butyrate oxidation pathway. Catalyzes the oxidation of butanoyl-CoA to crotonyl-CoA. Probably passes the electrons released by this reaction on to electron-transfer flavoproteins (EtfAB) to finally generate hydrogen and/or formate. This is Butyryl-CoA dehydrogenase Swol_2052 from Syntrophomonas wolfei subsp. wolfei (strain DSM 2245B / Goettingen).